The primary structure comprises 376 residues: tRNA (guanine(26)-N(2))-dimethyltransferase (376 aa).

The region spanning 4-373 (VAVKEGLARI…APFGVVAEVM (370 aa)) is the Trm1 methyltransferase domain. S-adenosyl-L-methionine-binding residues include R36, R61, D78, D120, and A121.

This sequence belongs to the class I-like SAM-binding methyltransferase superfamily. Trm1 family.

The enzyme catalyses guanosine(26) in tRNA + 2 S-adenosyl-L-methionine = N(2)-dimethylguanosine(26) in tRNA + 2 S-adenosyl-L-homocysteine + 2 H(+). Its function is as follows. Dimethylates a single guanine residue at position 26 of a number of tRNAs using S-adenosyl-L-methionine as donor of the methyl groups. The chain is tRNA (guanine(26)-N(2))-dimethyltransferase from Thermococcus kodakarensis (strain ATCC BAA-918 / JCM 12380 / KOD1) (Pyrococcus kodakaraensis (strain KOD1)).